A 630-amino-acid polypeptide reads, in one-letter code: E3 ubiquitin-protein ligase TRIM41 (630 aa).

The RING-type; degenerate zinc finger occupies 20–61 (CAICLDYFTDPVSIGCGHNFCRVCVTQLWGGEDEEDRDELDR). The span at 51–75 (EDEEDRDELDREEEEEEVGEEEEVE) shows a compositional bias: acidic residues. Disordered regions lie at residues 51–97 (EDEE…GDME) and 148–176 (EDED…PPPA). At Thr-85 the chain carries Phosphothreonine. Residues 148 to 166 (EDEDEEEEVLEEDEEEELD) show a composition bias toward acidic residues. The segment at 222 to 263 (NEQGICPRHQEALKLFCEVDEEAICVVCRESRSHKQHSVVPL) adopts a B box-type zinc-finger fold. Zn(2+) is bound by residues Cys-227, His-230, Cys-249, and His-255. Residue Lys-256 forms a Glycyl lysine isopeptide (Lys-Gly) (interchain with G-Cter in SUMO2) linkage. Positions 281 to 374 (LRKHLEAVQK…AEAQERSQQG (94 aa)) form a coiled coil. One can recognise a B30.2/SPRY domain in the interval 413–630 (LTDAIVRKMS…SKGTRIKLCP (218 aa)). Position 447 is a phosphoserine (Ser-447). Positions 503–535 (ARESTHHKEKVGSGGSSVSSGDASSSRHHHRRR) are disordered.

Belongs to the TRIM/RBCC family. In terms of assembly, interacts with PRKCA. Interacts with NOD2. Interacts with TRIM17; this interaction prevents TRIM41 activity on ZSCAN2. Post-translationally, auto-ubiquitinated.

Its subcellular location is the cytoplasm. The protein localises to the nucleus. It catalyses the reaction S-ubiquitinyl-[E2 ubiquitin-conjugating enzyme]-L-cysteine + [acceptor protein]-L-lysine = [E2 ubiquitin-conjugating enzyme]-L-cysteine + N(6)-ubiquitinyl-[acceptor protein]-L-lysine.. Its pathway is protein modification; protein ubiquitination. In terms of biological role, E3 ligase that plays essential roles in innate antiviral response. Directly binds to influenza A virus or vesicular stomatitis virus nucleoproteins and targets them for ubiquitination and proteasomal degradation, thereby limiting viral infections. Activates the innate antiviral response by catalyzing monoubiquitination of CGAS, thereby activating CGAS. Also involved in innate antiviral response by mediating 'Lys-63'-linked polyubiquitylation of BCL10 which in turn hubs NEMO for activation of NF-kappa-B and IRF3 pathways. Catalyzes the ubiquitin-mediated degradation of other substrates including protein kinase C, ZSCAN21 or TOP3B suggesting additional roles besides its function in immune response. In Mus musculus (Mouse), this protein is E3 ubiquitin-protein ligase TRIM41.